The sequence spans 103 residues: Large ribosomal subunit protein bL21 (103 aa).

It belongs to the bacterial ribosomal protein bL21 family. As to quaternary structure, part of the 50S ribosomal subunit. Contacts protein L20.

In terms of biological role, this protein binds to 23S rRNA in the presence of protein L20. In Thermobifida fusca (strain YX), this protein is Large ribosomal subunit protein bL21.